Consider the following 156-residue polypeptide: MNINSTLIGQAIAFAIFVMFCMKFVWPPLIGAINDRQRKIAEGLNAAEKAKADLATAERDVQQELDLAKTKAAALIEQANKSANQLVEDAKSQAQVEGERIRQQAQASIDQEINQARESLRAQVAELAVLGAEKILQDKVDVQKHASMLDQLAAKL.

The chain crosses the membrane as a helical span at residues alanine 11–glycine 31.

This sequence belongs to the ATPase B chain family. In terms of assembly, F-type ATPases have 2 components, F(1) - the catalytic core - and F(0) - the membrane proton channel. F(1) has five subunits: alpha(3), beta(3), gamma(1), delta(1), epsilon(1). F(0) has three main subunits: a(1), b(2) and c(10-14). The alpha and beta chains form an alternating ring which encloses part of the gamma chain. F(1) is attached to F(0) by a central stalk formed by the gamma and epsilon chains, while a peripheral stalk is formed by the delta and b chains.

It localises to the cell inner membrane. Its function is as follows. F(1)F(0) ATP synthase produces ATP from ADP in the presence of a proton or sodium gradient. F-type ATPases consist of two structural domains, F(1) containing the extramembraneous catalytic core and F(0) containing the membrane proton channel, linked together by a central stalk and a peripheral stalk. During catalysis, ATP synthesis in the catalytic domain of F(1) is coupled via a rotary mechanism of the central stalk subunits to proton translocation. Component of the F(0) channel, it forms part of the peripheral stalk, linking F(1) to F(0). This chain is ATP synthase subunit b, found in Psychrobacter cryohalolentis (strain ATCC BAA-1226 / DSM 17306 / VKM B-2378 / K5).